The sequence spans 275 residues: Large ribosomal subunit protein uL2 (275 aa).

The disordered stretch occupies residues 223-275 (VVMNPVDHPHGGGEGKSSGGRHPVSPWGMPTKGYKTRKNKGTDQYIVRRRNKK).

Belongs to the universal ribosomal protein uL2 family. Part of the 50S ribosomal subunit. Forms a bridge to the 30S subunit in the 70S ribosome.

Functionally, one of the primary rRNA binding proteins. Required for association of the 30S and 50S subunits to form the 70S ribosome, for tRNA binding and peptide bond formation. It has been suggested to have peptidyltransferase activity; this is somewhat controversial. Makes several contacts with the 16S rRNA in the 70S ribosome. The polypeptide is Large ribosomal subunit protein uL2 (Psychromonas ingrahamii (strain DSM 17664 / CCUG 51855 / 37)).